The chain runs to 352 residues: tRNA (guanine-N(1)-)-methyltransferase (352 aa).

S-adenosyl-L-methionine contacts are provided by residues G109 and 129–134 (IGDYVL).

It belongs to the RNA methyltransferase TrmD family. Homodimer.

It localises to the cytoplasm. The catalysed reaction is guanosine(37) in tRNA + S-adenosyl-L-methionine = N(1)-methylguanosine(37) in tRNA + S-adenosyl-L-homocysteine + H(+). Functionally, specifically methylates guanosine-37 in various tRNAs. This chain is tRNA (guanine-N(1)-)-methyltransferase, found in Chlamydia trachomatis serovar L2 (strain ATCC VR-902B / DSM 19102 / 434/Bu).